The chain runs to 132 residues: uncharacterized protein (132 aa).

Belongs to the mycobacterial PPE family.

This is an uncharacterized protein from Mycobacterium tuberculosis (strain ATCC 25618 / H37Rv).